Here is a 120-residue protein sequence, read N- to C-terminus: Large ribosomal subunit protein uL18 (120 aa).

It belongs to the universal ribosomal protein uL18 family. As to quaternary structure, part of the 50S ribosomal subunit; part of the 5S rRNA/L5/L18/L25 subcomplex. Contacts the 5S and 23S rRNAs.

In terms of biological role, this is one of the proteins that bind and probably mediate the attachment of the 5S RNA into the large ribosomal subunit, where it forms part of the central protuberance. This chain is Large ribosomal subunit protein uL18, found in Methylobacterium nodulans (strain LMG 21967 / CNCM I-2342 / ORS 2060).